We begin with the raw amino-acid sequence, 494 residues long: Probable cytosol aminopeptidase (494 aa).

Mn(2+) contacts are provided by K260 and D265. Residue K272 is part of the active site. The Mn(2+) site is built by D283, D342, and E344. R346 is an active-site residue.

Belongs to the peptidase M17 family. Mn(2+) is required as a cofactor.

It localises to the cytoplasm. The enzyme catalyses Release of an N-terminal amino acid, Xaa-|-Yaa-, in which Xaa is preferably Leu, but may be other amino acids including Pro although not Arg or Lys, and Yaa may be Pro. Amino acid amides and methyl esters are also readily hydrolyzed, but rates on arylamides are exceedingly low.. It carries out the reaction Release of an N-terminal amino acid, preferentially leucine, but not glutamic or aspartic acids.. Its function is as follows. Presumably involved in the processing and regular turnover of intracellular proteins. Catalyzes the removal of unsubstituted N-terminal amino acids from various peptides. The sequence is that of Probable cytosol aminopeptidase from Bacillus cereus (strain B4264).